The sequence spans 404 residues: Protein IQ-DOMAIN 12 (404 aa).

The tract at residues 8–25 (FGWMKRLFICEAKARAEK) is calmodulin-binding. The Nuclear localization signal 1 motif lies at 11 to 18 (MKRLFICE). 2 consecutive IQ domains span residues 108 to 135 (NVAA…ALVR) and 136 to 158 (LQAI…SSHS). The Nuclear localization signal 2 signature appears at 226 to 233 (IKRDRMLK).

The protein belongs to the IQD family. Binds to multiple calmodulin (CaM) in the presence of Ca(2+) and CaM-like proteins.

The protein localises to the nucleus. It is found in the cell membrane. May be involved in cooperative interactions with calmodulins or calmodulin-like proteins. Recruits calmodulin proteins to microtubules, thus being a potential scaffold in cellular signaling and trafficking. May associate with nucleic acids and regulate gene expression at the transcriptional or post-transcriptional level. The sequence is that of Protein IQ-DOMAIN 12 from Arabidopsis thaliana (Mouse-ear cress).